A 297-amino-acid chain; its full sequence is Large ribosomal subunit protein uL18 (297 aa).

An N-acetylglycine modification is found at Gly2. 2 positions are modified to N6-acetyllysine: Lys5 and Lys48. Ser185 is modified (phosphoserine). An N6-acetyllysine; alternate modification is found at Lys220. A Glycyl lysine isopeptide (Lys-Gly) (interchain with G-Cter in SUMO1); alternate cross-link involves residue Lys220. Residue Lys220 forms a Glycyl lysine isopeptide (Lys-Gly) (interchain with G-Cter in SUMO2); alternate linkage. At Thr232 the chain carries Phosphothreonine. A disordered region spans residues 253–297; the sequence is YEKKPKKEVKKKRWNRPKMSLAQKKDRVAQKKASFLRAQERAAES. Basic residues predominate over residues 258 to 268; sequence KKEVKKKRWNR. Ser272 bears the Phosphoserine mark.

Belongs to the universal ribosomal protein uL18 family. In terms of assembly, component of the large ribosomal subunit (LSU). Part of the 5S RNP complex, which is a LSU subcomplex composed of the 5S RNA, RPL5 and RPL11. Component of a hexameric 5S RNP precursor complex, composed of 5S RNA, RRS1, RPF2/BXDC1, RPL5, RPL11 and HEATR3; this complex acts as a precursor for ribosome assembly. Interacts with NVL in an ATP-dependent manner. Interacts with RRP1B. Interacts with IPO5, IPO7 and KPNB1; these interactions may be involved in RPL5 nuclear import for the assembly of ribosomal subunits. Interacts with RRP1B.

It is found in the cytoplasm. It localises to the nucleus. The protein localises to the nucleolus. Its function is as follows. Component of the ribosome, a large ribonucleoprotein complex responsible for the synthesis of proteins in the cell. The small ribosomal subunit (SSU) binds messenger RNAs (mRNAs) and translates the encoded message by selecting cognate aminoacyl-transfer RNA (tRNA) molecules. The large subunit (LSU) contains the ribosomal catalytic site termed the peptidyl transferase center (PTC), which catalyzes the formation of peptide bonds, thereby polymerizing the amino acids delivered by tRNAs into a polypeptide chain. The nascent polypeptides leave the ribosome through a tunnel in the LSU and interact with protein factors that function in enzymatic processing, targeting, and the membrane insertion of nascent chains at the exit of the ribosomal tunnel. As part of the 5S RNP/5S ribonucleoprotein particle it is an essential component of the LSU, required for its formation and the maturation of rRNAs. It also couples ribosome biogenesis to p53/TP53 activation. As part of the 5S RNP it accumulates in the nucleoplasm and inhibits MDM2, when ribosome biogenesis is perturbed, mediating the stabilization and the activation of TP53. This chain is Large ribosomal subunit protein uL18 (RPL5), found in Macaca fascicularis (Crab-eating macaque).